The sequence spans 316 residues: Initiation factor TFIIB homolog (316 aa).

This sequence belongs to the asfivirus C315R family.

In terms of biological role, putative initation factor. The chain is Initiation factor TFIIB homolog from Ornithodoros (relapsing fever ticks).